The sequence spans 740 residues: MNPPGSLEALDPNVDEHLSTQILAPSVHSDNSQERIQARRLRIAARLEARRREALGEYLDGKKESEEDQSKSYKQKEESRLKLAKLLLCGTELVTNIQVAIDIREIHRRVEEEEIKRQRIEKLENEVKTSQDKFDEITSKWEEGKQKRIPQELWEMLNTQQLHCAGLLEDKNKLISELQQELKTKDDQYVKDLKKQSDDICLLLERMEEQVKNVMKTFREELYNIEKAFEVERQELLASNKKKWEQALQAHNAKELEYLNNRMKKVEDYEKQLNRQRIWDCEEYNMIKIKLEQDVQILEQQLQQRKAIYQLNQEKLEYNLQVLKKRDEESTVIKSQQKRKINRLHDILNNLRSKYAKQIKQFQEENQSLTSDYKRLVMQFKELQKAMRHFALIDDEKFWEIWLMNEEEAKDLIARAFDVDRIIHTHHLGLPWAAPDFWFLNNVGPISQQPQKSATQIVEEMLMRSEEEEAEEAAAEPESYLDLPKQISEKTTKRILMLLCDESGFLIESKLLSLLLPLEQNECYLLRLDAIFSALGIESEDDLYKLVNFFLKYRAHRLSSSLQIKPCSQASMEKASMEETSTRSELELAEQTEMEGEKEESLVEGEKEEEEETPPSPWVIHPNDVLKILEAFVMGLKKPRDSRAPLRVQKNVRDNSKDSEYWQALTTVIPSSKQNLWDALYTALEKYHLVLTQRAKLLLENSSLEQQNTELQALLQQYLNSKINSELQVPPTQVLRVPTK.

Residues 101 to 388 (IDIREIHRRV…QFKELQKAMR (288 aa)) adopt a coiled-coil conformation. The segment at 570–617 (ASMEKASMEETSTRSELELAEQTEMEGEKEESLVEGEKEEEEETPPSP) is disordered. Residues 575-586 (ASMEETSTRSEL) are compositionally biased toward basic and acidic residues. Residues 587-598 (ELAEQTEMEGEK) show a composition bias toward acidic residues. Positions 691-724 (LTQRAKLLLENSSLEQQNTELQALLQQYLNSKIN) form a coiled coil.

The protein belongs to the DRC1 family. Component of the nexin-dynein regulatory complex (N-DRC). Interacts with CCDC65/DRC2, DRC3, GAS8/DRC4 and TCTE1/DRC5.

It is found in the cytoplasm. The protein resides in the cytoskeleton. Its subcellular location is the cilium axoneme. It localises to the flagellum axoneme. Its function is as follows. Component of the nexin-dynein regulatory complex (N-DRC) a key regulator of ciliary/flagellar motility which maintains the alignment and integrity of the distal axoneme and regulates microtubule sliding in motile axonemes. Plays a critical role in the assembly of N-DRC and also stabilizes the assembly of multiple inner dynein arms and radial spokes. Coassembles with CCDC65/DRC2 to form a central scaffold needed for assembly of the N-DRC and its attachment to the outer doublet microtubules. The protein is Dynein regulatory complex protein 1 (DRC1) of Homo sapiens (Human).